The following is a 290-amino-acid chain: Pyridoxal kinase PdxY (290 aa).

Residues Ser12 and 47–48 contribute to the substrate site; that span reads TQ. Residues Asp114, Glu151, Lys184, and 211–214 each bind ATP; that span reads RPLL. Residue Asp225 participates in substrate binding.

It belongs to the pyridoxine kinase family. PdxY subfamily. As to quaternary structure, homodimer. Requires Mg(2+) as cofactor.

It carries out the reaction pyridoxal + ATP = pyridoxal 5'-phosphate + ADP + H(+). Its pathway is cofactor metabolism; pyridoxal 5'-phosphate salvage; pyridoxal 5'-phosphate from pyridoxal: step 1/1. Pyridoxal kinase involved in the salvage pathway of pyridoxal 5'-phosphate (PLP). Catalyzes the phosphorylation of pyridoxal to PLP. This is Pyridoxal kinase PdxY from Pseudomonas putida (strain ATCC 700007 / DSM 6899 / JCM 31910 / BCRC 17059 / LMG 24140 / F1).